The chain runs to 301 residues: D-alanine--D-alanine ligase (301 aa).

In terms of domain architecture, ATP-grasp spans 101–296; it reads KLMWRAAGLA…YPTLVRRVLE (196 aa). ATP is bound at residue 127–182; it reads EEELGLPLFVKPAREGSSIGVTKVKERGALKAAYEEAARHDPLVIAEKGVMGGEYT. Residues aspartate 250, glutamate 263, and asparagine 265 each coordinate Mg(2+).

This sequence belongs to the D-alanine--D-alanine ligase family. Mg(2+) serves as cofactor. Mn(2+) is required as a cofactor.

Its subcellular location is the cytoplasm. It catalyses the reaction 2 D-alanine + ATP = D-alanyl-D-alanine + ADP + phosphate + H(+). It participates in cell wall biogenesis; peptidoglycan biosynthesis. Functionally, cell wall formation. This Dechloromonas aromatica (strain RCB) protein is D-alanine--D-alanine ligase.